The following is a 487-amino-acid chain: MDPVVVLVLGLCCLLLLSIWKQNSGRGKLPPGPTPFPIIGNILQIDAKDISKSLTKFSECYGPVFTVYLGMKPTVVLHGYEAVKEALVDLGEEFAGRGSVPILEKVSKGLGIAFSNAKTWKEMRRFSLMTLRNFGMGKRSIEDRIQEEARCLVEELRKTNASPCDPTFILGCAPCNVICSVIFHNRFDYKDEEFLKLMESLNENVRILSSPWLQVYNNFPALLDYFPGIHKTLLKNADYIKNFIMEKVKEHQKLLDVNNPRDFIDCFLIKMEQENNLEFTLESLVIAVSDLFGAGTETTSTTLRYSLLLLLKHPEVAARVQEEIERVIGRHRSPCMQDRSRMPYTDAVIHEIQRFIDLLPTNLPHAVTRDVRFRNYFIPKGTDIITSLTSVLHDEKAFPNPKVFDPGHFLDESGNFKKSDYFMPFSAGKRMCVGEGLARMELFLFLTSILQNFKLQSLVEPKDLDITAVVNGFVSVPPSYQLCFIPI.

C432 is a heme binding site.

The protein belongs to the cytochrome P450 family. The cofactor is heme.

The protein resides in the endoplasmic reticulum membrane. It localises to the microsome membrane. The enzyme catalyses an organic molecule + reduced [NADPH--hemoprotein reductase] + O2 = an alcohol + oxidized [NADPH--hemoprotein reductase] + H2O + H(+). Its function is as follows. Cytochromes P450 are a group of heme-thiolate monooxygenases. In liver microsomes, this enzyme is involved in an NADPH-dependent electron transport pathway. It oxidizes a variety of structurally unrelated compounds, including steroids, fatty acids, and xenobiotics. This Oryctolagus cuniculus (Rabbit) protein is Cytochrome P450 2C5 (CYP2C5).